The chain runs to 391 residues: Acetate kinase (391 aa).

Asn-4 lines the Mg(2+) pocket. Lys-11 is a binding site for ATP. Arg-85 is a binding site for substrate. Asp-142 (proton donor/acceptor) is an active-site residue. ATP contacts are provided by residues 202 to 206 (HLGNG), 277 to 279 (DLR), and 325 to 329 (GIGEN). Glu-378 is a binding site for Mg(2+).

This sequence belongs to the acetokinase family. Homodimer. Mg(2+) serves as cofactor. The cofactor is Mn(2+).

The protein resides in the cytoplasm. It carries out the reaction acetate + ATP = acetyl phosphate + ADP. It participates in metabolic intermediate biosynthesis; acetyl-CoA biosynthesis; acetyl-CoA from acetate: step 1/2. Its function is as follows. Catalyzes the formation of acetyl phosphate from acetate and ATP. Can also catalyze the reverse reaction. The chain is Acetate kinase from Halalkalibacterium halodurans (strain ATCC BAA-125 / DSM 18197 / FERM 7344 / JCM 9153 / C-125) (Bacillus halodurans).